Consider the following 419-residue polypeptide: E3 ubiquitin-protein ligase RNFT1 (419 aa).

The disordered stretch occupies residues 1 to 120 (MKLRAQFDRG…SGESDLESGE (120 aa)). Composition is skewed to polar residues over residues 31 to 44 (EPSS…SLTL) and 72 to 82 (GSSSGSTNGRG). Positions 84–102 (TSRRMRTASHSHSHTHGHG) are enriched in basic residues. 6 helical membrane passes run 141–161 (FIVI…AVAV), 187–207 (LHCA…FYTF), 217–237 (FFAN…SVGV), 240–260 (FILK…PCPL), 270–290 (YMLI…PLWF), and 303–323 (VGLT…LLAL). The required for ubiquitin ligase activity and for protection against ER stress-induced cell death stretch occupies residues 352 to 403 (IREAGDICPICQADFKQPRVLVCQHIFCEECIAQWLNQERTCPLCRTVITDK). The RING-type zinc finger occupies 359–397 (CPICQADFKQPRVLVCQHIFCEECIAQWLNQERTCPLCR).

Its subcellular location is the endoplasmic reticulum membrane. It carries out the reaction S-ubiquitinyl-[E2 ubiquitin-conjugating enzyme]-L-cysteine + [acceptor protein]-L-lysine = [E2 ubiquitin-conjugating enzyme]-L-cysteine + N(6)-ubiquitinyl-[acceptor protein]-L-lysine.. It functions in the pathway protein modification; protein ubiquitination. In terms of biological role, E3 ubiquitin-protein ligase that acts in the endoplasmic reticulum (ER)-associated degradation (ERAD) pathway, which targets misfolded proteins that accumulate in the endoplasmic reticulum (ER) for ubiquitination and subsequent proteasome-mediated degradation. Protects cells from ER stress-induced apoptosis. This chain is E3 ubiquitin-protein ligase RNFT1 (rnft1), found in Danio rerio (Zebrafish).